The sequence spans 444 residues: Xaa-Pro dipeptidase (444 aa).

D247, D258, H340, E385, and E424 together coordinate Mn(2+).

Belongs to the peptidase M24B family. Bacterial-type prolidase subfamily. The cofactor is Mn(2+).

It catalyses the reaction Xaa-L-Pro dipeptide + H2O = an L-alpha-amino acid + L-proline. Functionally, splits dipeptides with a prolyl residue in the C-terminal position. This chain is Xaa-Pro dipeptidase, found in Photorhabdus laumondii subsp. laumondii (strain DSM 15139 / CIP 105565 / TT01) (Photorhabdus luminescens subsp. laumondii).